Here is a 172-residue protein sequence, read N- to C-terminus: Large ribosomal subunit protein uL10 (172 aa).

Belongs to the universal ribosomal protein uL10 family. In terms of assembly, part of the ribosomal stalk of the 50S ribosomal subunit. The N-terminus interacts with L11 and the large rRNA to form the base of the stalk. The C-terminus forms an elongated spine to which L12 dimers bind in a sequential fashion forming a multimeric L10(L12)X complex.

In terms of biological role, forms part of the ribosomal stalk, playing a central role in the interaction of the ribosome with GTP-bound translation factors. The protein is Large ribosomal subunit protein uL10 of Macrococcus caseolyticus (strain JCSC5402) (Macrococcoides caseolyticum).